Here is a 207-residue protein sequence, read N- to C-terminus: Ras-related protein Rab-8A (207 aa).

Ser-17, Gly-18, Val-19, Gly-20, Lys-21, Thr-22, Cys-23, Ser-35, Ser-39, and Thr-40 together coordinate GTP. Thr-22 lines the Mg(2+) pocket. 2 short sequence motifs (switch) span residues 31–45 and 63–80; these read DAFN…GIDF and DTAG…YYRG. Thr-40 and Asp-63 together coordinate Mg(2+). Residue Gly-66 coordinates GTP. The residue at position 72 (Thr-72) is a Phosphothreonine. Positions 121, 122, 124, 152, and 153 each coordinate GTP. Phosphoserine is present on residues Ser-181 and Ser-185. A Cysteine methyl ester modification is found at Cys-204. Cys-204 is lipidated: S-geranylgeranyl cysteine. A propeptide spans 205–207 (removed in mature form); that stretch reads VLL.

It belongs to the small GTPase superfamily. Rab family. In terms of assembly, interacts (GTP-bound form) with MICALL1; regulates RAB8A association with recycling endosomes. Interacts with MICALL2; competes with RAB13 and is involved in E-cadherin endocytic recycling. Interacts (GTP-bound form) with MICAL1, MICALCL, MICAL3, EHBP1 and EHBP1L1; at least in case of MICAL1, MICALCL, MICAL3 and EHBP1L1 two molecules of RAB8A can bind to one molecule of the effector protein; ternary complexes of RAB8A, RAB13 and either MICAL1 or EHBP1L1 are possible. Interacts with EHD1. Interacts with MAP4K2 and SYTL4. Interacts with SGSM1 and SGSM3. Interacts with RABIF, RIMS2, RPH3A and RPH3A. Interacts with OPTN. Interacts with RAB3IP, RAB3IP functions as guanine exchange factor (GEF). Interacts with MYO5B. Interacts with CIMAP3. Interacts with BIRC6/bruce. Interacts with OCRL. Interacts with AHI1. Interacts with DCDC1. Interacts with LRRK2; interaction facilitates phosphorylation of Thr-72. Interacts with RAB31P, GDI1, GDI2, CHM, CHML, RABGGTA, RABGGTB, TBC1D15 and INPP5B; these interactions are dependent on Thr-72 not being phosphorylated. Interacts with RILPL1 and RILPL2; these interactions are dependent on the phosphorylation of Thr-72 by LRRK2. Interacts with DZIP1; prevents inhibition by the GDP-dissociation inhibitor GDI2. Interacts (in GDP-bound form) with RAB3IP/Rabin8, RAB3IP functions as guanine exchange factor (GEF) towards RAB8A. Interacts (in GDP-bound form) with RPGR, RPGR functions as GEF towards RAB8A. Mg(2+) serves as cofactor. In terms of processing, phosphorylation of Thr-72 in the switch II region by LRRK2 prevents the association of RAB regulatory proteins, including CHM, CHML and RAB GDP dissociation inhibitors GDI1 and GDI2. Phosphorylation by LRRK2 is required for localization to stressed lysosomes.

It is found in the cell membrane. It localises to the golgi apparatus. The protein resides in the endosome membrane. Its subcellular location is the recycling endosome membrane. The protein localises to the cell projection. It is found in the cilium. It localises to the cytoplasmic vesicle. The protein resides in the phagosome membrane. Its subcellular location is the cytoplasm. The protein localises to the cytoskeleton. It is found in the microtubule organizing center. It localises to the centrosome. The protein resides in the centriole. Its subcellular location is the cilium basal body. The protein localises to the midbody. It is found in the lysosome. It carries out the reaction GTP + H2O = GDP + phosphate + H(+). Regulated by guanine nucleotide exchange factors (GEFs) such as RAB3IP/Rabin8 and RPGR which promote the exchange of bound GDP for free GTP, GTPase activating proteins (GAPs) which increase the GTP hydrolysis activity, and GDP dissociation inhibitors (GDIs) which inhibit the dissociation of the nucleotide from the GTPase. Activated in response to insulin. Its function is as follows. The small GTPases Rab are key regulators of intracellular membrane trafficking, from the formation of transport vesicles to their fusion with membranes. Rabs cycle between an inactive GDP-bound form and an active GTP-bound form that is able to recruit to membranes different sets of downstream effectors directly responsible for vesicle formation, movement, tethering and fusion. RAB8A is involved in polarized vesicular trafficking and neurotransmitter release. Together with RAB11A, RAB3IP, the exocyst complex, PARD3, PRKCI, ANXA2, CDC42 and DNMBP promotes transcytosis of PODXL to the apical membrane initiation sites (AMIS), apical surface formation and lumenogenesis. Regulates the compacted morphology of the Golgi. Together with MYO5B and RAB11A participates in epithelial cell polarization. Also involved in membrane trafficking to the cilium and ciliogenesis. Together with MICALL2, may also regulate adherens junction assembly. May play a role in insulin-induced transport to the plasma membrane of the glucose transporter GLUT4 and therefore play a role in glucose homeostasis. Involved in autophagy. Participates in the export of a subset of neosynthesized proteins through a Rab8-Rab10-Rab11-dependent endososomal export route. Targeted to and stabilized on stressed lysosomes through LRRK2 phosphorylation. Suppresses stress-induced lysosomal enlargement through EHBP1 and EHNP1L1 effector proteins. The polypeptide is Ras-related protein Rab-8A (RAB8A) (Pongo abelii (Sumatran orangutan)).